Reading from the N-terminus, the 423-residue chain is Glucose-1-phosphate adenylyltransferase (423 aa).

Residues tyrosine 107, glycine 172, glutamate 187–lysine 188, and serine 205 contribute to the alpha-D-glucose 1-phosphate site.

Belongs to the bacterial/plant glucose-1-phosphate adenylyltransferase family. Homotetramer.

It catalyses the reaction alpha-D-glucose 1-phosphate + ATP + H(+) = ADP-alpha-D-glucose + diphosphate. It functions in the pathway glycan biosynthesis; glycogen biosynthesis. Its function is as follows. Involved in the biosynthesis of ADP-glucose, a building block required for the elongation reactions to produce glycogen. Catalyzes the reaction between ATP and alpha-D-glucose 1-phosphate (G1P) to produce pyrophosphate and ADP-Glc. The protein is Glucose-1-phosphate adenylyltransferase of Cereibacter sphaeroides (strain ATCC 17025 / ATH 2.4.3) (Rhodobacter sphaeroides).